A 513-amino-acid chain; its full sequence is Serine/threonine-protein kinase UL13 homolog (513 aa).

Positions Met-1–Asp-27 are disordered. The segment covering Thr-10–Thr-23 has biased composition (polar residues). A Protein kinase domain is found at Lys-145 to Leu-487. ATP contacts are provided by residues Ala-151–Val-159 and Lys-170. The Proton acceptor role is filled by Asp-268.

The protein belongs to the protein kinase superfamily. Ser/Thr protein kinase family. In terms of processing, autophosphorylated.

Its subcellular location is the virion tegument. It localises to the host nucleus. The catalysed reaction is L-seryl-[protein] + ATP = O-phospho-L-seryl-[protein] + ADP + H(+). It carries out the reaction L-threonyl-[protein] + ATP = O-phospho-L-threonyl-[protein] + ADP + H(+). Multifunctional serine/threonine kinase that plays a role in several processes including egress of virus particles from the nucleus, modulation of the actin cytoskeleton and regulation of viral and cellular gene expression. This Gallid herpesvirus 2 (strain Chicken/Md5/ATCC VR-987) (GaHV-2) protein is Serine/threonine-protein kinase UL13 homolog (MDV025).